A 214-amino-acid chain; its full sequence is Adenylate kinase (214 aa).

An ATP-binding site is contributed by 10-15 (GAGKGT). Residues 30-59 (STGDMLRAAVKAGSELGLKAKEIMDAGKLV) form an NMP region. AMP is bound by residues Thr31, Arg36, 57 to 59 (KLV), 85 to 88 (GFPR), and Gln92. Residues 122 to 159 (GRRVHAPSGRVYHVTFNPPRVEGKDDMTGEELTTRKDD) form an LID region. Residues Arg123 and 132–133 (VY) contribute to the ATP site. Residues Arg156 and Arg167 each coordinate AMP. Arg200 lines the ATP pocket.

It belongs to the adenylate kinase family. As to quaternary structure, monomer.

The protein resides in the cytoplasm. The enzyme catalyses AMP + ATP = 2 ADP. Its pathway is purine metabolism; AMP biosynthesis via salvage pathway; AMP from ADP: step 1/1. Its function is as follows. Catalyzes the reversible transfer of the terminal phosphate group between ATP and AMP. Plays an important role in cellular energy homeostasis and in adenine nucleotide metabolism. This is Adenylate kinase from Erwinia tasmaniensis (strain DSM 17950 / CFBP 7177 / CIP 109463 / NCPPB 4357 / Et1/99).